We begin with the raw amino-acid sequence, 295 residues long: 33 kDa chaperonin (295 aa).

Cystine bridges form between cysteine 238–cysteine 240 and cysteine 271–cysteine 274.

The protein belongs to the HSP33 family. Post-translationally, under oxidizing conditions two disulfide bonds are formed involving the reactive cysteines. Under reducing conditions zinc is bound to the reactive cysteines and the protein is inactive.

It localises to the cytoplasm. Its function is as follows. Redox regulated molecular chaperone. Protects both thermally unfolding and oxidatively damaged proteins from irreversible aggregation. Plays an important role in the bacterial defense system toward oxidative stress. In Clostridium botulinum (strain Eklund 17B / Type B), this protein is 33 kDa chaperonin.